Consider the following 200-residue polypeptide: Dephospho-CoA kinase (200 aa).

The DPCK domain maps to 4–200 (VIGLTGGIGS…QKYIKMSHLY (197 aa)). 12–17 (GSGKTT) serves as a coordination point for ATP.

It belongs to the CoaE family.

The protein resides in the cytoplasm. It catalyses the reaction 3'-dephospho-CoA + ATP = ADP + CoA + H(+). It functions in the pathway cofactor biosynthesis; coenzyme A biosynthesis; CoA from (R)-pantothenate: step 5/5. In terms of biological role, catalyzes the phosphorylation of the 3'-hydroxyl group of dephosphocoenzyme A to form coenzyme A. This is Dephospho-CoA kinase from Photobacterium profundum (strain SS9).